The primary structure comprises 354 residues: Ferrochelatase (354 aa).

Histidine 204 and glutamate 306 together coordinate Fe cation.

This sequence belongs to the ferrochelatase family.

Its subcellular location is the cytoplasm. The enzyme catalyses heme b + 2 H(+) = protoporphyrin IX + Fe(2+). It participates in porphyrin-containing compound metabolism; protoheme biosynthesis; protoheme from protoporphyrin-IX: step 1/1. Functionally, catalyzes the ferrous insertion into protoporphyrin IX. This is Ferrochelatase from Coxiella burnetii (strain CbuG_Q212) (Coxiella burnetii (strain Q212)).